Consider the following 578-residue polypeptide: ATP-dependent RNA helicase dbp3 (578 aa).

The span at 59-69 shows a compositional bias: basic and acidic residues; it reads KRSADEEASVK. The tract at residues 59-117 is disordered; that stretch reads KRSADEEASVKRKEKKSKHEHKKHKKDKPSADKDRISKKDKKKSKKGKSKTKEESIEIN. Basic residues predominate over residues 70–85; that stretch reads RKEKKSKHEHKKHKKD. The span at 86–95 shows a compositional bias: basic and acidic residues; that stretch reads KPSADKDRIS. A compositionally biased stretch (basic residues) spans 96–107; sequence KKDKKKSKKGKS. A Q motif motif is present at residues 167-193; the sequence is LQFDELDVSAKLREGLKNYKEPTPIQA. Positions 196 to 373 constitute a Helicase ATP-binding domain; that stretch reads WPYLLAGRDV…ATFLKDPVKI (178 aa). Position 209-216 (209-216) interacts with ATP; sequence AETGSGKT. The short motif at 316 to 319 is the DEAD box element; it reads DEAD. One can recognise a Helicase C-terminal domain in the interval 402 to 550; that stretch reads MLDNLLRKHL…DIPEGLFKFG (149 aa).

Belongs to the DEAD box helicase family. DDX5/DBP2 subfamily.

It localises to the nucleus. It is found in the nucleolus. It catalyses the reaction ATP + H2O = ADP + phosphate + H(+). Its function is as follows. ATP-dependent RNA helicase required for 60S ribosomal subunit synthesis. Involved in efficient pre-rRNA processing, predominantly at site A3, which is necessary for the normal formation of 25S and 5.8S rRNAs. This is ATP-dependent RNA helicase dbp3 (dbp3) from Schizosaccharomyces pombe (strain 972 / ATCC 24843) (Fission yeast).